The following is a 205-amino-acid chain: Imidazole glycerol phosphate synthase subunit HisH (205 aa).

The Glutamine amidotransferase type-1 domain maps to 6–205; the sequence is RVGIIDHGSG…LLTRWLNQLS (200 aa). C84 functions as the Nucleophile in the catalytic mechanism. Catalysis depends on residues H185 and E187.

Heterodimer of HisH and HisF.

It localises to the cytoplasm. It carries out the reaction 5-[(5-phospho-1-deoxy-D-ribulos-1-ylimino)methylamino]-1-(5-phospho-beta-D-ribosyl)imidazole-4-carboxamide + L-glutamine = D-erythro-1-(imidazol-4-yl)glycerol 3-phosphate + 5-amino-1-(5-phospho-beta-D-ribosyl)imidazole-4-carboxamide + L-glutamate + H(+). It catalyses the reaction L-glutamine + H2O = L-glutamate + NH4(+). The protein operates within amino-acid biosynthesis; L-histidine biosynthesis; L-histidine from 5-phospho-alpha-D-ribose 1-diphosphate: step 5/9. In terms of biological role, IGPS catalyzes the conversion of PRFAR and glutamine to IGP, AICAR and glutamate. The HisH subunit catalyzes the hydrolysis of glutamine to glutamate and ammonia as part of the synthesis of IGP and AICAR. The resulting ammonia molecule is channeled to the active site of HisF. This is Imidazole glycerol phosphate synthase subunit HisH from Cutibacterium acnes (strain DSM 16379 / KPA171202) (Propionibacterium acnes).